The sequence spans 602 residues: Chaperone protein DnaK (602 aa).

Position 199 is a phosphothreonine; by autocatalysis (Thr199).

This sequence belongs to the heat shock protein 70 family.

Acts as a chaperone. The polypeptide is Chaperone protein DnaK (Carsonella ruddii (strain PV)).